Here is a 432-residue protein sequence, read N- to C-terminus: Glutamate-1-semialdehyde 2,1-aminomutase (432 aa).

Residue K267 is modified to N6-(pyridoxal phosphate)lysine.

Belongs to the class-III pyridoxal-phosphate-dependent aminotransferase family. HemL subfamily. As to quaternary structure, homodimer. Pyridoxal 5'-phosphate is required as a cofactor.

It is found in the cytoplasm. The catalysed reaction is (S)-4-amino-5-oxopentanoate = 5-aminolevulinate. The protein operates within porphyrin-containing compound metabolism; protoporphyrin-IX biosynthesis; 5-aminolevulinate from L-glutamyl-tRNA(Glu): step 2/2. This Rhodococcus erythropolis (strain PR4 / NBRC 100887) protein is Glutamate-1-semialdehyde 2,1-aminomutase.